We begin with the raw amino-acid sequence, 154 residues long: Ribonuclease H (154 aa).

One can recognise an RNase H type-1 domain in the interval 1–142 (MEKTVEIYTD…VDDLARDAAG (142 aa)). The Mg(2+) site is built by aspartate 10, glutamate 48, aspartate 70, and aspartate 134.

This sequence belongs to the RNase H family. In terms of assembly, monomer. The cofactor is Mg(2+).

The protein resides in the cytoplasm. It catalyses the reaction Endonucleolytic cleavage to 5'-phosphomonoester.. In terms of biological role, endonuclease that specifically degrades the RNA of RNA-DNA hybrids. The protein is Ribonuclease H of Pseudoalteromonas translucida (strain TAC 125).